The following is a 149-amino-acid chain: Arginine repressor (149 aa).

The protein belongs to the ArgR family.

It localises to the cytoplasm. It functions in the pathway amino-acid biosynthesis; L-arginine biosynthesis [regulation]. Its function is as follows. Regulates arginine biosynthesis genes. This is Arginine repressor from Geobacillus sp. (strain WCH70).